The chain runs to 449 residues: Glucose-6-phosphate isomerase (449 aa).

The active-site Proton donor is the Glu-291. Catalysis depends on residues His-312 and Lys-426.

This sequence belongs to the GPI family.

The protein resides in the cytoplasm. The catalysed reaction is alpha-D-glucose 6-phosphate = beta-D-fructose 6-phosphate. It participates in carbohydrate biosynthesis; gluconeogenesis. The protein operates within carbohydrate degradation; glycolysis; D-glyceraldehyde 3-phosphate and glycerone phosphate from D-glucose: step 2/4. Its function is as follows. Catalyzes the reversible isomerization of glucose-6-phosphate to fructose-6-phosphate. The polypeptide is Glucose-6-phosphate isomerase (Streptococcus equi subsp. zooepidemicus (strain MGCS10565)).